The chain runs to 842 residues: Translation initiation factor IF-2 (842 aa).

The segment at 94-259 (QRSPEEIQAE…HGFQNPTGPV (166 aa)) is disordered. Residues 96–138 (SPEEIQAEQKRELDERRAAENAARDKVEAEVRQRNEEQARRQA) show a composition bias toward basic and acidic residues. A compositionally biased stretch (low complexity) spans 139-148 (ADSAVAAPAP). Over residues 149-159 (AAKPEPAPAAA) the composition is skewed to pro residues. Residues 160–172 (PAPVVADAPASED) show a composition bias toward low complexity. Composition is skewed to basic and acidic residues over residues 173-202 (AAAR…RGEA) and 226-235 (TTDEESDGAR). Basic residues predominate over residues 236–249 (RGRGGKGKLKKRNQ). Positions 342–509 (SRAPVVTVMG…AVLLQAEILE (168 aa)) constitute a tr-type G domain. The G1 stretch occupies residues 351–358 (GHVDHGKT). 351–358 (GHVDHGKT) lines the GTP pocket. Residues 376–380 (GITQH) form a G2 region. The segment at 397–400 (DTPG) is G3. GTP contacts are provided by residues 397-401 (DTPGH) and 451-454 (NKID). A G4 region spans residues 451–454 (NKID). Residues 487–489 (SAK) are G5.

This sequence belongs to the TRAFAC class translation factor GTPase superfamily. Classic translation factor GTPase family. IF-2 subfamily.

The protein localises to the cytoplasm. One of the essential components for the initiation of protein synthesis. Protects formylmethionyl-tRNA from spontaneous hydrolysis and promotes its binding to the 30S ribosomal subunits. Also involved in the hydrolysis of GTP during the formation of the 70S ribosomal complex. The chain is Translation initiation factor IF-2 from Pseudomonas putida (strain GB-1).